The chain runs to 463 residues: uncharacterized protein (463 aa).

12 helical membrane-spanning segments follow: residues 21–40 (DFACNLIYATVSTYLLFFYT), 50–72 (AGTMFLVVRIIDALADPFIGTIV), 84–104 (PYLLFGAFPFVILAILCFTTP), 112–132 (LIYAYITYVGLSLTYTTINVP), 156–176 (LFANLGGLVVAFFVPLLAAYL), 186–206 (GWQLTMGILGMIGGCLLIFCF), 237–257 (LVVLSIFFIIIFGVNSISNSV), 271–291 (LVKWYGLIGSLPALVILPFIP), 311–331 (IIGLLALLFVPPSNVYLILVC), 334–354 (IAAAGSLTAGGYMWALIPETI), 367–387 (GLIYAIIGFFFKFGMALGGVV), and 408–428 (LMGILITTTIIPVFLLVLALI).

It belongs to the sodium:galactoside symporter (TC 2.A.2) family.

The protein localises to the cell membrane. This is an uncharacterized protein from Bacillus subtilis (strain 168).